Consider the following 340-residue polypeptide: Ketol-acid reductoisomerase (NADP(+)) (340 aa).

The KARI N-terminal Rossmann domain maps to 3 to 183; sequence LPIYYDKDCD…GGGRTGIIHT (181 aa). Residues 26-29, serine 54, and 84-87 each bind NADP(+); these read FGSQ and DEIQ. Residue histidine 109 is part of the active site. Glycine 135 contacts NADP(+). Residues 184–329 form the KARI C-terminal knotted domain; the sequence is TFKDETETDL…KRLRAMMPWI (146 aa). Mg(2+) contacts are provided by aspartate 192, glutamate 196, glutamate 228, and glutamate 232. Serine 253 serves as a coordination point for substrate.

The protein belongs to the ketol-acid reductoisomerase family. Requires Mg(2+) as cofactor.

It carries out the reaction (2R)-2,3-dihydroxy-3-methylbutanoate + NADP(+) = (2S)-2-acetolactate + NADPH + H(+). The enzyme catalyses (2R,3R)-2,3-dihydroxy-3-methylpentanoate + NADP(+) = (S)-2-ethyl-2-hydroxy-3-oxobutanoate + NADPH + H(+). Its pathway is amino-acid biosynthesis; L-isoleucine biosynthesis; L-isoleucine from 2-oxobutanoate: step 2/4. It participates in amino-acid biosynthesis; L-valine biosynthesis; L-valine from pyruvate: step 2/4. In terms of biological role, involved in the biosynthesis of branched-chain amino acids (BCAA). Catalyzes an alkyl-migration followed by a ketol-acid reduction of (S)-2-acetolactate (S2AL) to yield (R)-2,3-dihydroxy-isovalerate. In the isomerase reaction, S2AL is rearranged via a Mg-dependent methyl migration to produce 3-hydroxy-3-methyl-2-ketobutyrate (HMKB). In the reductase reaction, this 2-ketoacid undergoes a metal-dependent reduction by NADPH to yield (R)-2,3-dihydroxy-isovalerate. This chain is Ketol-acid reductoisomerase (NADP(+)), found in Nitratiruptor sp. (strain SB155-2).